A 150-amino-acid polypeptide reads, in one-letter code: Endoribonuclease YbeY (150 aa).

Residues His112, His116, and His122 each contribute to the Zn(2+) site.

This sequence belongs to the endoribonuclease YbeY family. The cofactor is Zn(2+).

Its subcellular location is the cytoplasm. In terms of biological role, single strand-specific metallo-endoribonuclease involved in late-stage 70S ribosome quality control and in maturation of the 3' terminus of the 16S rRNA. In Geobacter sulfurreducens (strain ATCC 51573 / DSM 12127 / PCA), this protein is Endoribonuclease YbeY.